The following is a 134-amino-acid chain: Profilin-2 (134 aa).

A disulfide bridge links Cys13 with Cys118. Positions 84 to 100 (AVIRGKKGSGGITIKKT) match the Involved in PIP2 interaction motif. At Thr114 the chain carries Phosphothreonine.

This sequence belongs to the profilin family. As to quaternary structure, occurs in many kinds of cells as a complex with monomeric actin in a 1:1 ratio. Post-translationally, phosphorylated by MAP kinases.

The protein resides in the cytoplasm. It is found in the cytoskeleton. In terms of biological role, binds to actin and affects the structure of the cytoskeleton. At high concentrations, profilin prevents the polymerization of actin, whereas it enhances it at low concentrations. By binding to PIP2, it inhibits the formation of IP3 and DG. This Olea europaea (Common olive) protein is Profilin-2 (PRO2).